A 1909-amino-acid chain; its full sequence is NFX1-type zinc finger-containing protein 1 (1909 aa).

Basic and acidic residues-rich tracts occupy residues 1 to 12 (MEDRRPHLEARP) and 76 to 107 (RNQEGHTSDEARDQRQSQNDTRRRNDDQEGRS). 2 disordered regions span residues 1 to 133 (MEDR…QPQQ) and 787 to 813 (TQSASPAGPENTAQAEGEEEEEGEEEG). The span at 113–122 (SSDTFQQWHT) shows a compositional bias: polar residues. Over residues 802-813 (EGEEEEEGEEEG) the composition is skewed to acidic residues. A coiled-coil region spans residues 939-964 (RRRILSYERQYRTWAERMAELRLQED). NF-X1-type zinc fingers lie at residues 1291–1313 (CGHVCTRACHPYDSSHKEFQCMK), 1375–1393 (CGHRCSHLCGEDCVRLCSE), 1433–1455 (CGHPCPGSCHSCFEGRFHERCQQ), and 1463–1480 (CSHKCQEPCTGECPPCQR). Residues 1733–1764 (LAKKRLSFSSQELSDLQSEIQRLTYLVNLLMR) adopt a coiled-coil conformation. The segment at 1818–1889 (ISDEERVQIV…LASEMDGAQH (72 aa)) adopts an RZ-type zinc-finger fold. The Zn(2+) site is built by cysteine 1840, histidine 1844, cysteine 1860, and cysteine 1863.

The protein belongs to the ZNFX1 family. In terms of assembly, interacts with MAVS.

The protein localises to the mitochondrion outer membrane. The protein resides in the cytoplasm. It localises to the stress granule. Functionally, RNA-binding protein that initiates the antiviral response and is required to restrict the replication of RNA viruses. Acts as a double-stranded RNA (dsRNA) sensor that recognizes viral RNA and then interacts with MAVS to initiate the type I interferon response. Also required for immunity against some bacteria, such as mycobacteria. In Mus musculus (Mouse), this protein is NFX1-type zinc finger-containing protein 1.